The following is a 462-amino-acid chain: Argininosuccinate lyase (462 aa).

It belongs to the lyase 1 family. Argininosuccinate lyase subfamily.

The protein resides in the cytoplasm. The enzyme catalyses 2-(N(omega)-L-arginino)succinate = fumarate + L-arginine. Its pathway is amino-acid biosynthesis; L-arginine biosynthesis; L-arginine from L-ornithine and carbamoyl phosphate: step 3/3. The protein is Argininosuccinate lyase of Bacillus anthracis (strain A0248).